Consider the following 773-residue polypeptide: Lon protease homolog 2, peroxisomal (773 aa).

Residues 9-198 enclose the Lon N-terminal domain; that stretch reads LPVIVVDSGV…MCEKWMQMQR (190 aa). 336-343 lines the ATP pocket; that stretch reads GPPGIGKT. Positions 587-766 constitute a Lon proteolytic domain; it reads PLPPGVCFGL…EDVIEAMMEK (180 aa). Catalysis depends on residues Ser-672 and Lys-715. The Microbody targeting signal signature appears at 771–773; sequence AKL.

It belongs to the peptidase S16 family.

It localises to the peroxisome matrix. It carries out the reaction Hydrolysis of proteins in presence of ATP.. Its function is as follows. ATP-dependent serine protease that mediates the selective degradation of misfolded and unassembled polypeptides in the peroxisomal matrix. Necessary for type 2 peroxisome targeting signal (PTS2)-containing protein processing and facilitates peroxisome matrix protein import. The chain is Lon protease homolog 2, peroxisomal from Caenorhabditis briggsae.